The following is a 945-amino-acid chain: Valine--tRNA ligase (945 aa).

Positions 42–52 (PNVTGTLHMGH) match the 'HIGH' region motif. The short motif at 552 to 556 (KMSKS) is the 'KMSKS' region element. Position 555 (Lys-555) interacts with ATP. A coiled-coil region spans residues 879-945 (DKATETARLS…VQTQLSKLKD (67 aa)).

Belongs to the class-I aminoacyl-tRNA synthetase family. ValS type 1 subfamily. In terms of assembly, monomer.

The protein resides in the cytoplasm. The enzyme catalyses tRNA(Val) + L-valine + ATP = L-valyl-tRNA(Val) + AMP + diphosphate. In terms of biological role, catalyzes the attachment of valine to tRNA(Val). As ValRS can inadvertently accommodate and process structurally similar amino acids such as threonine, to avoid such errors, it has a 'posttransfer' editing activity that hydrolyzes mischarged Thr-tRNA(Val) in a tRNA-dependent manner. The protein is Valine--tRNA ligase of Neisseria meningitidis serogroup A / serotype 4A (strain DSM 15465 / Z2491).